The following is a 185-amino-acid chain: Stathmin-4 (185 aa).

An SLD domain is found at 48 to 185; it reads SDMEVIELNK…EVRKNKEATR (138 aa). Positions 90-185 form a coiled coil; the sequence is SLEEIQKKLE…EVRKNKEATR (96 aa). The interval 165–185 is disordered; sequence ERLQEKDKHAEEVRKNKEATR. The span at 166–185 shows a compositional bias: basic and acidic residues; that stretch reads RLQEKDKHAEEVRKNKEATR.

It belongs to the stathmin family. In terms of tissue distribution, nervous tissue.

The sequence is that of Stathmin-4 (stmn4) from Xenopus laevis (African clawed frog).